We begin with the raw amino-acid sequence, 475 residues long: Ribulose bisphosphate carboxylase large chain (475 aa).

Positions 1 to 2 (MS) are excised as a propeptide. At P3 the chain carries N-acetylproline. Residue K14 is modified to N6,N6,N6-trimethyllysine. Substrate contacts are provided by N123 and T173. K175 acts as the Proton acceptor in catalysis. Residue K177 coordinates substrate. Residues K201, D203, and E204 each coordinate Mg(2+). At K201 the chain carries N6-carboxylysine. H294 (proton acceptor) is an active-site residue. Positions 295, 327, and 379 each coordinate substrate.

The protein belongs to the RuBisCO large chain family. Type I subfamily. As to quaternary structure, heterohexadecamer of 8 large chains and 8 small chains; disulfide-linked. The disulfide link is formed within the large subunit homodimers. Requires Mg(2+) as cofactor. In terms of processing, the disulfide bond which can form in the large chain dimeric partners within the hexadecamer appears to be associated with oxidative stress and protein turnover.

The protein localises to the plastid. It is found in the chloroplast. The catalysed reaction is 2 (2R)-3-phosphoglycerate + 2 H(+) = D-ribulose 1,5-bisphosphate + CO2 + H2O. It carries out the reaction D-ribulose 1,5-bisphosphate + O2 = 2-phosphoglycolate + (2R)-3-phosphoglycerate + 2 H(+). Its function is as follows. RuBisCO catalyzes two reactions: the carboxylation of D-ribulose 1,5-bisphosphate, the primary event in carbon dioxide fixation, as well as the oxidative fragmentation of the pentose substrate in the photorespiration process. Both reactions occur simultaneously and in competition at the same active site. In Pinus koraiensis (Korean pine), this protein is Ribulose bisphosphate carboxylase large chain.